The primary structure comprises 217 residues: Probable lipoprotein CPn_0875/CP_0994/CPj0875/CpB0904 (217 aa).

The N-terminal stretch at 1–21 (MKRVIYKTIFCGLTLLTSLSS) is a signal peptide. The N-palmitoyl cysteine moiety is linked to residue C22. C22 is lipidated: S-diacylglycerol cysteine.

Belongs to the chlamydial CPn_0875/CT_734/TC_0107 family.

The protein localises to the cell membrane. The chain is Probable lipoprotein CPn_0875/CP_0994/CPj0875/CpB0904 from Chlamydia pneumoniae (Chlamydophila pneumoniae).